The following is a 414-amino-acid chain: Serpin A3-6 (414 aa).

A signal peptide spans 1-25 (MRTERVSPLLALGILVAGLCSRVHC). N103, N183, N233, N267, and N321 each carry an N-linked (GlcNAc...) asparagine glycan.

This sequence belongs to the serpin family. Homodimer.

It localises to the cytoplasmic vesicle. The protein localises to the secretory vesicle. It is found in the chromaffin granule. The protein resides in the secreted. Serine protease inhibitor. This Bos taurus (Bovine) protein is Serpin A3-6.